Consider the following 314-residue polypeptide: tRNA pseudouridine synthase B (314 aa).

Residue H43 coordinates substrate. The active-site Nucleophile is D48. Residues Y76, Y179, and L200 each contribute to the substrate site.

It belongs to the pseudouridine synthase TruB family. Type 1 subfamily.

It carries out the reaction uridine(55) in tRNA = pseudouridine(55) in tRNA. In terms of biological role, responsible for synthesis of pseudouridine from uracil-55 in the psi GC loop of transfer RNAs. In Escherichia coli O157:H7, this protein is tRNA pseudouridine synthase B.